Here is a 666-residue protein sequence, read N- to C-terminus: Endogenous retrovirus group K member 9 Gag polyprotein (666 aa).

A lipid anchor (N-myristoyl glycine) is attached at G2. The tract at residues 165-264 (GKGPELVGPS…APPSRQGSEL (100 aa)) is disordered. A compositionally biased stretch (pro residues) spans 232–247 (GMPPAPQGRAPYPQPP). CCHC-type zinc fingers lie at residues 544–561 (GKCY…NCPV) and 580–597 (DLCP…QCRS). Positions 598-641 (KFDKNGQPLSGNEQRGQPQAPQQTGAFPIQPFVPQGFQGQQPPL) are disordered. Residues 604 to 622 (QPLSGNEQRGQPQAPQQTG) are compositionally biased toward polar residues. Residues 624–640 (FPIQPFVPQGFQGQQPP) are compositionally biased toward low complexity.

The protein belongs to the beta type-B retroviral Gag protein family. HERV class-II K(HML-2) gag subfamily. Post-translationally, myristoylation is essential for retroviral assembly. Alteration of the glycine residue leads to a block in the budding of particles and an accumulation of Gag inside the cell. Specific enzymatic cleavages may yield mature proteins.

Its subcellular location is the cell membrane. The products of the Gag polyproteins of infectious retroviruses perform highly complex orchestrated tasks during the assembly, budding, maturation, and infection stages of the viral replication cycle. During viral assembly, the proteins form membrane associations and self-associations that ultimately result in budding of an immature virion from the infected cell. Gag precursors also function during viral assembly to selectively bind and package two plus strands of genomic RNA. Endogenous Gag proteins may have kept, lost or modified their original function during evolution. This chain is Endogenous retrovirus group K member 9 Gag polyprotein (ERVK-9), found in Homo sapiens (Human).